Here is a 226-residue protein sequence, read N- to C-terminus: Large ribosomal subunit protein uL1 (226 aa).

Belongs to the universal ribosomal protein uL1 family. Part of the 50S ribosomal subunit.

Its function is as follows. Binds directly to 23S rRNA. The L1 stalk is quite mobile in the ribosome, and is involved in E site tRNA release. In terms of biological role, protein L1 is also a translational repressor protein, it controls the translation of the L11 operon by binding to its mRNA. This is Large ribosomal subunit protein uL1 from Mycoplasma capricolum subsp. capricolum (strain California kid / ATCC 27343 / NCTC 10154).